A 298-amino-acid chain; its full sequence is Enoyl-CoA hydratase AKT6-1 (298 aa).

Positions 1-23 (MTFSTTKSVAMSPDDDAPSFDIN) are disordered.

It belongs to the enoyl-CoA hydratase/isomerase family.

The protein operates within mycotoxin biosynthesis. Functionally, enoyl-CoA hydratase; part of the gene clusters that mediate the biosynthesis of the host-selective toxins (HSTs) AK-toxins responsible for Japanese pear black spot disease by the Japanese pear pathotype. AK-toxins are esters of 9,10-epoxy 8-hydroxy 9-methyldecatrienoic acid (EDA). On cellular level, AK-toxins affect plasma membrane of susceptible cells and cause a sudden increase in loss of K(+) after a few minutes of toxin treatment. The acyl-CoA ligase AKT1, the hydrolase AKT2 and enoyl-CoA hydratase AKT3 are all involved in the biosynthesis of the AK-, AF- and ACT-toxin common 9,10-epoxy-8-hydroxy-9-methyl-decatrienoic acid (EDA) structural moiety. Part of the EDA biosynthesis occurs in the peroxisome since these 3 enzymes are localized in peroxisomes. The exact roles of the 3 enzymes, as well as of additional AK-toxin clusters enzymes, including AKT4, AKT6 and AKTS1, have still to be elucidated. The Cytochrome P450 monooxygenase AKT7 on the other side functions to limit production of EDA and AK-toxin, probably via the catalysis of a side reaction of EDA or its precursor. In Alternaria alternata (Alternaria rot fungus), this protein is Enoyl-CoA hydratase AKT6-1.